A 133-amino-acid chain; its full sequence is Holo-[acyl-carrier-protein] synthase (133 aa).

The Mg(2+) site is built by Asp8 and Glu57.

Belongs to the P-Pant transferase superfamily. AcpS family. Mg(2+) is required as a cofactor.

It is found in the cytoplasm. It carries out the reaction apo-[ACP] + CoA = holo-[ACP] + adenosine 3',5'-bisphosphate + H(+). In terms of biological role, transfers the 4'-phosphopantetheine moiety from coenzyme A to a Ser of acyl-carrier-protein. This Caulobacter sp. (strain K31) protein is Holo-[acyl-carrier-protein] synthase.